A 333-amino-acid polypeptide reads, in one-letter code: Gamma-D-glutamyl-L-lysine dipeptidyl-peptidase (333 aa).

The first 23 residues, 1-23 (MKKVGTAFLTTLFIFSSFTSAHA), serve as a signal peptide directing secretion. Substrate contacts are provided by residues Glu-83, Tyr-118, 237-239 (DCS), and 256-257 (DS). A NlpC/P60 domain is found at 208 to 332 (TPAADDLINT…EEYAGARRYL (125 aa)). The active-site Nucleophile is Cys-238. His-291 acts as the Proton acceptor in catalysis. The active site involves His-303.

Belongs to the peptidase C40 family. As to quaternary structure, monomer in solution.

It carries out the reaction The enzyme releases L-Ala-gamma-D-Glu dipeptides from cell wall peptides via cleavage of an L-Ala-gamma-D-Glu-|-L-Lys bond.. It participates in cell wall degradation; peptidoglycan degradation. Its function is as follows. Specifically hydrolyzes gamma-D-glutamyl-L-lysine bonds in murein peptides, releasing L-Ala-D-Glu. In Bacillus cereus (strain ATCC 10987 / NRS 248), this protein is Gamma-D-glutamyl-L-lysine dipeptidyl-peptidase.